A 398-amino-acid polypeptide reads, in one-letter code: ATP-dependent RNA helicase eIF4A (398 aa).

The Q motif signature appears at 25-53; sequence DSFDTMNLKPELLRGVYAYGFERPSAIQQ. The 171-residue stretch at 56 to 226 folds into the Helicase ATP-binding domain; the sequence is IMPVIKGHDV…TKFMRDPVRI (171 aa). Residue 69–76 coordinates ATP; it reads AQSGTGKT. Positions 174–177 match the DEAD box motif; it reads DEAD. The region spanning 237–398 is the Helicase C-terminal domain; that stretch reads GIKQFYIAVE…EMPMNVADLI (162 aa).

It belongs to the DEAD box helicase family. eIF4A subfamily. As to quaternary structure, component of the eIF4F complex, which composition varies with external and internal environmental conditions. It is composed of at least eIF4A, eIF4E and eIF4G.

The protein localises to the cytoplasm. It catalyses the reaction ATP + H2O = ADP + phosphate + H(+). Its function is as follows. ATP-dependent RNA helicase which is a subunit of the eIF4F complex involved in cap recognition and is required for mRNA binding to ribosome. In the current model of translation initiation, eIF4A unwinds RNA secondary structures in the 5'-UTR of mRNAs which is necessary to allow efficient binding of the small ribosomal subunit, and subsequent scanning for the initiator codon. This is ATP-dependent RNA helicase eIF4A (tif1) from Botryotinia fuckeliana (strain B05.10) (Noble rot fungus).